We begin with the raw amino-acid sequence, 303 residues long: Proteasome subunit beta (303 aa).

The propeptide at 1–67 (MTWQFPDRLS…SGGTGQLPHG (67 aa)) is removed in mature form; by autocatalysis. T68 acts as the Nucleophile in catalysis.

This sequence belongs to the peptidase T1B family. As to quaternary structure, the 20S proteasome core is composed of 14 alpha and 14 beta subunits that assemble into four stacked heptameric rings, resulting in a barrel-shaped structure. The two inner rings, each composed of seven catalytic beta subunits, are sandwiched by two outer rings, each composed of seven alpha subunits. The catalytic chamber with the active sites is on the inside of the barrel. Has a gated structure, the ends of the cylinder being occluded by the N-termini of the alpha-subunits. Is capped by the proteasome-associated ATPase, ARC.

The protein localises to the cytoplasm. It carries out the reaction Cleavage of peptide bonds with very broad specificity.. It participates in protein degradation; proteasomal Pup-dependent pathway. Its activity is regulated as follows. The formation of the proteasomal ATPase ARC-20S proteasome complex, likely via the docking of the C-termini of ARC into the intersubunit pockets in the alpha-rings, may trigger opening of the gate for substrate entry. Interconversion between the open-gate and close-gate conformations leads to a dynamic regulation of the 20S proteasome proteolysis activity. Component of the proteasome core, a large protease complex with broad specificity involved in protein degradation. The chain is Proteasome subunit beta from Mycolicibacterium paratuberculosis (strain ATCC BAA-968 / K-10) (Mycobacterium paratuberculosis).